A 350-amino-acid chain; its full sequence is B1 bradykinin receptor (350 aa).

Residues 1–41 (MASRAPLELLPLNRSQLSPPNATTCDDAPEAWDLLHRVLPS) lie on the Extracellular side of the membrane. Residues Asn-13 and Asn-21 are each glycosylated (N-linked (GlcNAc...) asparagine). Residues 42-62 (VIIIICVCGLLGNLLVLAVLL) form a helical membrane-spanning segment. Residues 63 to 72 (RPRRRLNVAE) lie on the Cytoplasmic side of the membrane. The helical transmembrane segment at 73 to 93 (MYLANLAASDLVFVLGLPFWA) threads the bilayer. Topologically, residues 94–110 (ANISNQFRWPFGGLLCR) are extracellular. N-linked (GlcNAc...) asparagine glycosylation is present at Asn-95. Residues Cys-109 and Cys-186 are joined by a disulfide bond. The chain crosses the membrane as a helical span at residues 111 to 131 (LVNGVIKANLFISIFLVVAIS). At 132–150 (RDRYRALVHPMATRRRRQA) the chain is on the cytoplasmic side. A helical membrane pass occupies residues 151–171 (RATCVLIWVAGSLLSVPTFLF). Over 172-204 (RSIEAVPELNNDSACVLLHPPGAWHVARMVELN) the chain is Extracellular. An N-linked (GlcNAc...) asparagine glycan is attached at Asn-182. A helical transmembrane segment spans residues 205 to 225 (VLGFLLPLAAIVFFNCHILAS). Over 226 to 248 (LRGRPEVRGARCGGPPDGRTTAL) the chain is Cytoplasmic. A helical transmembrane segment spans residues 249–269 (ILTFVAAFLVCWTPYHFFAFL). At 270-292 (EFLTQVQVVRGCFWENFKDLGLQ) the chain is on the extracellular side. Residues 293–313 (YASFFAFINSCLNPVIYVFVG) traverse the membrane as a helical segment. Over 314–350 (RLFRTRVWDLFKQCAPRRPPAVSWSHRKRVLQLFWQN) the chain is Cytoplasmic. A lipid anchor (S-palmitoyl cysteine) is attached at Cys-327.

Belongs to the G-protein coupled receptor 1 family. Bradykinin receptor subfamily. BDKRB1 sub-subfamily.

The protein localises to the cell membrane. Its function is as follows. This is a receptor for bradykinin. Could be a factor in chronic pain and inflammation. In Canis lupus familiaris (Dog), this protein is B1 bradykinin receptor (BDKRB1).